The primary structure comprises 558 residues: Ceramide kinase-like protein (558 aa).

The tract at residues 1–36 (MPWRRRRNRVSALEGGREEEAPPEAAAVPPALLTSP) is disordered. 2 consecutive short sequence motifs (nuclear localization signal) follow at residues 2–9 (PWRRRRNR) and 102–106 (KLKRR). One can recognise a DAGKc domain in the interval 164–339 (NRPKSLKILL…VDVCTFSTAG (176 aa)).

Phosphorylated on serine residues. As to expression, isoform 1 and isoform 2 are expressed in adult retina, liver and pancreas as well as in fetal brain, lung and kidney. Isoform 3 is expressed in adult retina as well as in fetal lung and liver. Isoform 4 is expressed in adult retina, lung and kidney as well as in fetal lung and liver. Moderately expressed in retina, kidney, lung, testis, trachea, and pancreas. Weakly expressed in brain, placenta and liver.

It localises to the cytoplasm. It is found in the nucleus. The protein localises to the nucleolus. The protein resides in the golgi apparatus. Its subcellular location is the trans-Golgi network. It localises to the endoplasmic reticulum. In terms of biological role, has no detectable ceramide-kinase activity. Overexpression of CERKL protects cells from apoptosis in oxidative stress conditions. The protein is Ceramide kinase-like protein (CERKL) of Homo sapiens (Human).